The sequence spans 148 residues: Caltractin (148 aa).

EF-hand domains are found at residues 4 to 39 (EQKQEXREAFDLFDTDGSGTIDAKELKVXMXALGFE), 40 to 75 (PKKEEIQKMISDIDKDGSGTIDFEEFLQMMTAKMGE), 77 to 112 (DSREEIMKAFRLFDDDQTGKITFKNLKRVAKELGEN), and 113 to 148 (LTDEEIQEMIDEADRDGDGEINEEEFFRIMKKTSLF). The Ca(2+) site is built by D17, D19, S21, T23, E28, D53, D55, S57, T59, and E64. Ca(2+) is bound by residues D126, D128, D130, E132, and E137.

This sequence belongs to the centrin family. As to expression, ubiquitous.

Functionally, this calcium-binding protein is found in the basal body complexes (the functional homolog of the centrosome in animal cell). In mitotic cells it is specifically associated with the poles of the mitotic spindles at the sites of the duplicated basal body complexes. In Spermatozopsis similis (Green alga), this protein is Caltractin.